Consider the following 339-residue polypeptide: Mitogen-activated protein kinase kinase kinase 18 (339 aa).

The region spanning 3-263 (WTRGKTLGRG…ASQLLNHPFL (261 aa)) is the Protein kinase domain. ATP is bound by residues 9–17 (LGRGSTATV) and lysine 32. The Proton acceptor role is filled by aspartate 131. Position 301 is a phosphoserine (serine 301).

Belongs to the protein kinase superfamily. Ser/Thr protein kinase family. In terms of assembly, interacts with ABI1. Binds to MKK3. Associates with SRK2E within the nucleus. Autophosphorylated. Post-translationally, unstable protein degraded by the proteasome pathway; this degradation is promoted by ABI1, but blocked by ABA. Expressed in roots, leaves and flowers.

It is found in the nucleus. The enzyme catalyses L-seryl-[protein] + ATP = O-phospho-L-seryl-[protein] + ADP + H(+). It carries out the reaction L-threonyl-[protein] + ATP = O-phospho-L-threonyl-[protein] + ADP + H(+). Kinase activity is activated by abscisic acid (ABA). Inhibited by ABI1. Activated by SRK2E. In terms of biological role, component of the abscisic acid (ABA) signaling pathway that acts as ABA signal transducer in the context of abiotic stresses. Triggers MPK1, MPK2, MPK7 and MPK14 activation in a MKK3-dependent manner and MPK6 activation in a MKK3-independent manner. Mediates the ABA-dependent activation of the MKK3-MPK7 module. Positive regulator of ABA responses leading to the induction of gene expression (e.g. RD29B and RAB18) and involved in various responses including stomatal development, stomatal movement, inhibition of germination and root growth. Promotes leaf senescence. The chain is Mitogen-activated protein kinase kinase kinase 18 from Arabidopsis thaliana (Mouse-ear cress).